A 60-amino-acid polypeptide reads, in one-letter code: Large ribosomal subunit protein uL30 (60 aa).

This sequence belongs to the universal ribosomal protein uL30 family. As to quaternary structure, part of the 50S ribosomal subunit.

This Finegoldia magna (strain ATCC 29328 / DSM 20472 / WAL 2508) (Peptostreptococcus magnus) protein is Large ribosomal subunit protein uL30.